The sequence spans 420 residues: Protein BDLF2 (420 aa).

Disordered stretches follow at residues 1-21 (MVDE…SREE) and 64-129 (AAAV…GGQR). Over 1–184 (MVDEQVAVEH…AETLAEPPRC (184 aa)) the chain is Intravirion. Low complexity predominate over residues 92-108 (TNTQDQNQNQTTRARTN). Residues 185 to 205 (FMLSFVFIYYCCYLAFLALLA) traverse the membrane as a helical; Signal-anchor for type II membrane protein segment. Topologically, residues 206 to 420 (FGFNPLFLPS…LEEVMYVMVQ (215 aa)) are virion surface. N-linked (GlcNAc...) asparagine; by host glycans are attached at residues N258, N264, N300, N304, N371, and N384.

It belongs to the herpesviridae BDLF2 family. As to quaternary structure, interacts with BMRF2.

Its subcellular location is the virion membrane. Rearranges cellular actin to increase intercellular contacts and thereby promote virus cell-to-cell spreading. Induce the outgrowth of long, branched plasma membrane fronds to create intercellular network for virion traffic. The fronds are actin based and RhoA-dependent. The polypeptide is Protein BDLF2 (Epstein-Barr virus (strain GD1) (HHV-4)).